A 303-amino-acid polypeptide reads, in one-letter code: Endo-1,3;1,4-beta-D-glucanase (303 aa).

An N-terminal signal peptide occupies residues M1–L43. Residues N115, N197, and N257 are each glycosylated (N-linked (GlcNAc...) asparagine).

Post-translationally, glycosylated.

The protein localises to the secreted. Plays a role in control of plant growth. Mediates specific degradation of cell wall (1,3)(1,4)-beta-D-glucans and is related to auxin-mediated growth and development of cereal coleoptiles. This Zea mays (Maize) protein is Endo-1,3;1,4-beta-D-glucanase.